We begin with the raw amino-acid sequence, 729 residues long: Fatty acid oxidation complex subunit alpha (729 aa).

Residues 1–189 form an enoyl-CoA hydratase/isomerase region; sequence MLYKGDTLYL…KIGLVDGVVK (189 aa). A substrate-binding site is contributed by D296. Residues 311–729 form a 3-hydroxyacyl-CoA dehydrogenase region; the sequence is ETPKQAAVLG…ARPVGDLKTA (419 aa). NAD(+)-binding positions include M324, D343, 400-402, K407, and S429; that span reads VVE. Residue H450 is the For 3-hydroxyacyl-CoA dehydrogenase activity of the active site. N453 is an NAD(+) binding site. Residues N500 and Y660 each contribute to the substrate site. The tract at residues 708–729 is disordered; the sequence is RHNEPYYPPVEPARPVGDLKTA.

The protein in the N-terminal section; belongs to the enoyl-CoA hydratase/isomerase family. This sequence in the C-terminal section; belongs to the 3-hydroxyacyl-CoA dehydrogenase family. In terms of assembly, heterotetramer of two alpha chains (FadB) and two beta chains (FadA).

It catalyses the reaction a (3S)-3-hydroxyacyl-CoA + NAD(+) = a 3-oxoacyl-CoA + NADH + H(+). The catalysed reaction is a (3S)-3-hydroxyacyl-CoA = a (2E)-enoyl-CoA + H2O. It carries out the reaction a 4-saturated-(3S)-3-hydroxyacyl-CoA = a (3E)-enoyl-CoA + H2O. The enzyme catalyses (3S)-3-hydroxybutanoyl-CoA = (3R)-3-hydroxybutanoyl-CoA. It catalyses the reaction a (3Z)-enoyl-CoA = a 4-saturated (2E)-enoyl-CoA. The catalysed reaction is a (3E)-enoyl-CoA = a 4-saturated (2E)-enoyl-CoA. It functions in the pathway lipid metabolism; fatty acid beta-oxidation. Involved in the aerobic and anaerobic degradation of long-chain fatty acids via beta-oxidation cycle. Catalyzes the formation of 3-oxoacyl-CoA from enoyl-CoA via L-3-hydroxyacyl-CoA. It can also use D-3-hydroxyacyl-CoA and cis-3-enoyl-CoA as substrate. The protein is Fatty acid oxidation complex subunit alpha of Escherichia coli (strain UTI89 / UPEC).